Consider the following 342-residue polypeptide: Flap endonuclease 1 (342 aa).

An N-domain region spans residues 1–99 (MGVKIGELIE…RAIEERVRAR (99 aa)). 7 residues coordinate Mg(2+): D28, D81, E153, E155, D174, D176, and D237. The I-domain stretch occupies residues 117–259 (EARKYAQAAL…RALELVKKYK (143 aa)).

This sequence belongs to the XPG/RAD2 endonuclease family. FEN1 subfamily. As to quaternary structure, interacts with PCNA. PCNA stimulates the nuclease activity without altering cleavage specificity. Mg(2+) serves as cofactor.

In terms of biological role, structure-specific nuclease with 5'-flap endonuclease and 5'-3' exonuclease activities involved in DNA replication and repair. During DNA replication, cleaves the 5'-overhanging flap structure that is generated by displacement synthesis when DNA polymerase encounters the 5'-end of a downstream Okazaki fragment. Binds the unpaired 3'-DNA end and kinks the DNA to facilitate 5' cleavage specificity. Cleaves one nucleotide into the double-stranded DNA from the junction in flap DNA, leaving a nick for ligation. Also involved in the base excision repair (BER) pathway. Acts as a genome stabilization factor that prevents flaps from equilibrating into structures that lead to duplications and deletions. Also possesses 5'-3' exonuclease activity on nicked or gapped double-stranded DNA. In Korarchaeum cryptofilum (strain OPF8), this protein is Flap endonuclease 1.